The primary structure comprises 252 residues: uncharacterized protein (252 aa).

In terms of domain architecture, ABC transporter spans Ile-13–Leu-247. Gly-45–Ser-52 contributes to the ATP binding site.

The protein belongs to the ABC transporter superfamily.

The protein resides in the cell inner membrane. Probably part of a binding-protein-dependent transport system YdhWXYZ for an amino acid. Probably responsible for energy coupling to the transport system. This is an uncharacterized protein from Escherichia coli (strain K12).